A 411-amino-acid polypeptide reads, in one-letter code: LL-diaminopimelate aminotransferase (411 aa).

Residues tyrosine 15 and glycine 42 each contribute to the substrate site. Residues tyrosine 72, 108–109, tyrosine 132, asparagine 188, tyrosine 219, and 247–249 contribute to the pyridoxal 5'-phosphate site; these read AK and SFS. Substrate-binding residues include lysine 109, tyrosine 132, and asparagine 188. N6-(pyridoxal phosphate)lysine is present on lysine 250. Residues arginine 258 and asparagine 293 each contribute to the pyridoxal 5'-phosphate site. Substrate contacts are provided by asparagine 293 and arginine 389.

Belongs to the class-I pyridoxal-phosphate-dependent aminotransferase family. LL-diaminopimelate aminotransferase subfamily. As to quaternary structure, homodimer. Pyridoxal 5'-phosphate serves as cofactor.

The enzyme catalyses (2S,6S)-2,6-diaminopimelate + 2-oxoglutarate = (S)-2,3,4,5-tetrahydrodipicolinate + L-glutamate + H2O + H(+). Its pathway is amino-acid biosynthesis; L-lysine biosynthesis via DAP pathway; LL-2,6-diaminopimelate from (S)-tetrahydrodipicolinate (aminotransferase route): step 1/1. Involved in the synthesis of meso-diaminopimelate (m-DAP or DL-DAP), required for both lysine and peptidoglycan biosynthesis. Catalyzes the direct conversion of tetrahydrodipicolinate to LL-diaminopimelate. Is also able to catalyze the reverse reaction in vitro, i.e. the transamination of LL-diaminopimelate with 2-oxoglutarate to produce tetrahydrodipicolinate and glutamate. Can also use m-DAP instead of LL-DAP as the amino-group donor, and oxaloacetate or pyruvate as the amino-group acceptor. The chain is LL-diaminopimelate aminotransferase from Desulfitobacterium hafniense (strain DSM 10664 / DCB-2).